The primary structure comprises 1070 residues: DNA-directed RNA polymerase subunit beta (1070 aa).

The protein belongs to the RNA polymerase beta chain family. As to quaternary structure, in plastids the minimal PEP RNA polymerase catalytic core is composed of four subunits: alpha, beta, beta', and beta''. When a (nuclear-encoded) sigma factor is associated with the core the holoenzyme is formed, which can initiate transcription.

Its subcellular location is the plastid. The protein localises to the chloroplast. The enzyme catalyses RNA(n) + a ribonucleoside 5'-triphosphate = RNA(n+1) + diphosphate. Its function is as follows. DNA-dependent RNA polymerase catalyzes the transcription of DNA into RNA using the four ribonucleoside triphosphates as substrates. This Daucus carota (Wild carrot) protein is DNA-directed RNA polymerase subunit beta.